A 279-amino-acid polypeptide reads, in one-letter code: Sulfur carrier protein FdhD (279 aa).

The Cysteine persulfide intermediate role is filled by C112.

The protein belongs to the FdhD family.

It localises to the cytoplasm. Required for formate dehydrogenase (FDH) activity. Acts as a sulfur carrier protein that transfers sulfur from IscS to the molybdenum cofactor prior to its insertion into FDH. This is Sulfur carrier protein FdhD from Nocardia farcinica (strain IFM 10152).